A 206-amino-acid polypeptide reads, in one-letter code: Small ribosomal subunit protein uS4 (206 aa).

An S4 RNA-binding domain is found at 96 to 156 (SRLDNVVYRM…NKSKNQSRIK (61 aa)).

The protein belongs to the universal ribosomal protein uS4 family. Part of the 30S ribosomal subunit. Contacts protein S5. The interaction surface between S4 and S5 is involved in control of translational fidelity.

Functionally, one of the primary rRNA binding proteins, it binds directly to 16S rRNA where it nucleates assembly of the body of the 30S subunit. Its function is as follows. With S5 and S12 plays an important role in translational accuracy. This is Small ribosomal subunit protein uS4 from Buchnera aphidicola subsp. Acyrthosiphon pisum (strain 5A).